The following is an 816-amino-acid chain: Phosphatidylinositol 4-kinase beta (816 aa).

Disordered regions lie at residues methionine 1–leucine 30, glutamate 101–arginine 120, and alanine 248–serine 318. N-acetylglycine is present on glycine 2. The interval glycine 2–isoleucine 68 is interaction with ACBD3. The PIK helical domain maps to leucine 29–serine 242. Serine 258 bears the Phosphoserine mark. Threonine 263 is modified (phosphothreonine). 5 positions are modified to phosphoserine: serine 266, serine 275, serine 277, serine 284, and serine 294. Polar residues-rich tracts occupy residues aspartate 278 to lysine 297 and serine 306 to serine 318. Serine 428 carries the post-translational modification Phosphoserine. Position 438 is a phosphothreonine (threonine 438). Serine 511 bears the Phosphoserine mark. Residues threonine 517 and threonine 519 each carry the phosphothreonine modification. Positions glutamate 535–threonine 801 constitute a PI3K/PI4K catalytic domain. The G-loop stretch occupies residues valine 541–glycine 547. The catalytic loop stretch occupies residues glutamine 668–asparagine 676. Residues histidine 687–threonine 711 form an activation loop region.

Belongs to the PI3/PI4-kinase family. Type III PI4K subfamily. Interacts with ARF1 and ARF3 in the Golgi complex, but not with ARF4, ARF5 or ARF6. Interacts with NCS1/FREQ in a calcium-independent manner. Interacts with CALN1/CABP8 and CALN2/CABP7; in a calcium-dependent manner; this interaction competes with NCS1/FREQ binding. Interacts with ACBD3. Interacts with ARMH3, YWHAB, YWHAE, YWHAG, YWHAH, YWHAQ, YWHAZ and SFN. Interacts with GGA2 (via VHS domain); the interaction is important for PI4KB location at the Golgi apparatus membrane. Interacts with ATG9A. Mg(2+) is required as a cofactor. Mn(2+) serves as cofactor.

It is found in the endomembrane system. Its subcellular location is the mitochondrion outer membrane. It localises to the rough endoplasmic reticulum membrane. The protein localises to the golgi apparatus. The protein resides in the golgi apparatus membrane. The enzyme catalyses a 1,2-diacyl-sn-glycero-3-phospho-(1D-myo-inositol) + ATP = a 1,2-diacyl-sn-glycero-3-phospho-(1D-myo-inositol 4-phosphate) + ADP + H(+). Inhibited by wortmannin. Increased kinase activity upon interaction with NCS1/FREQ. Phosphorylates phosphatidylinositol (PI) in the first committed step in the production of the second messenger inositol-1,4,5,-trisphosphate (PIP). May regulate Golgi disintegration/reorganization during mitosis, possibly via its phosphorylation. Involved in Golgi-to-plasma membrane trafficking. The protein is Phosphatidylinositol 4-kinase beta (PI4KB) of Bos taurus (Bovine).